The primary structure comprises 686 residues: Pheromone-processing carboxypeptidase KEX1 (686 aa).

The signal sequence occupies residues 1–19; the sequence is MKFLLPTFIIFIYTLLVSA. Over 20–543 the chain is Lumenal; it reads LPTKEGSDPK…SDSTSSKFTR (524 aa). 2 N-linked (GlcNAc...) asparagine glycosylation sites follow: N85 and N122. Catalysis depends on residues S184 and D394. Residues N441 and N449 are each glycosylated (N-linked (GlcNAc...) asparagine). Residue H452 is part of the active site. The disordered stretch occupies residues 489–519; sequence LGSRKENDESKNPVESPSQTIDPIISSSSSS. A compositionally biased stretch (basic and acidic residues) spans 491 to 500; sequence SRKENDESKN. Low complexity predominate over residues 504 to 519; it reads SPSQTIDPIISSSSSS. The chain crosses the membrane as a helical span at residues 544–564; it reads LIQLAVILVIFWGVYVLYASY. Topologically, residues 565–686 are cytoplasmic; that stretch reads KSRPSSIIKK…SDPATHKSVS (122 aa). Disordered stretches follow at residues 570-590 and 627-686; these read SIIKKPTNNTSNITRSSTGKK and KDTR…KSVS. Positions 576-586 are enriched in low complexity; it reads TNNTSNITRSS. Basic and acidic residues-rich tracts occupy residues 627–641 and 674–686; these read KDTRGRYAPVHREND and QPRSDPATHKSVS.

This sequence belongs to the peptidase S10 family.

It is found in the golgi apparatus. Its subcellular location is the trans-Golgi network membrane. The enzyme catalyses Preferential release of a C-terminal arginine or lysine residue.. Functionally, protease with a carboxypeptidase B-like function involved in the C-terminal processing of the lysine and arginine residues from protein precursors. Promotes cell fusion and is involved in the programmed cell death. This chain is Pheromone-processing carboxypeptidase KEX1 (KEX1), found in Candida dubliniensis (strain CD36 / ATCC MYA-646 / CBS 7987 / NCPF 3949 / NRRL Y-17841) (Yeast).